Consider the following 224-residue polypeptide: UPF0758 protein Lm4b_01560 (224 aa).

The 123-residue stretch at Val102–Phe224 folds into the MPN domain. Zn(2+) contacts are provided by His173, His175, and Asp186. The JAMM motif motif lies at His173–Asp186.

The protein belongs to the UPF0758 family.

This Listeria monocytogenes serotype 4b (strain CLIP80459) protein is UPF0758 protein Lm4b_01560.